A 146-amino-acid polypeptide reads, in one-letter code: Large ribosomal subunit protein uL15 (146 aa).

The disordered stretch occupies residues 1-46 (MKLHELQPAPGSRKKAVRVGRGIGSGNGKTAGRGHKGQKARSGGGV). Residues 21 to 31 (RGIGSGNGKTA) show a composition bias toward gly residues.

Belongs to the universal ribosomal protein uL15 family. As to quaternary structure, part of the 50S ribosomal subunit.

Its function is as follows. Binds to the 23S rRNA. The chain is Large ribosomal subunit protein uL15 from Geobacillus thermodenitrificans (strain NG80-2).